The following is a 226-amino-acid chain: MVRVAVIRFPGTNCDLEMAWAVKLAGGDPEFVWHEDGGLDDFDAVIIPGGFTYGDYIRAGAIAALSPILEEIRECAEDGRPVLGVCNGMQILAEAELIPGTLTVNVGNRFICDWVYLRVERTDTPFTTKYQEDEVIRVPIAHAEGRYYYENPEEIEDNVVFRFCGPDGDVSEEYNLNGSVGGITGVVNDDGNVLGMMPHPERAAHRLLNSDDGLRLFESLVEWCRS.

The Glutamine amidotransferase type-1 domain occupies 3–226 (RVAVIRFPGT…FESLVEWCRS (224 aa)). The Nucleophile role is filled by C86. Residues H199 and E201 contribute to the active site.

As to quaternary structure, part of the FGAM synthase complex composed of 1 PurL, 1 PurQ and 2 PurS subunits.

Its subcellular location is the cytoplasm. It catalyses the reaction N(2)-formyl-N(1)-(5-phospho-beta-D-ribosyl)glycinamide + L-glutamine + ATP + H2O = 2-formamido-N(1)-(5-O-phospho-beta-D-ribosyl)acetamidine + L-glutamate + ADP + phosphate + H(+). The enzyme catalyses L-glutamine + H2O = L-glutamate + NH4(+). It participates in purine metabolism; IMP biosynthesis via de novo pathway; 5-amino-1-(5-phospho-D-ribosyl)imidazole from N(2)-formyl-N(1)-(5-phospho-D-ribosyl)glycinamide: step 1/2. Its function is as follows. Part of the phosphoribosylformylglycinamidine synthase complex involved in the purines biosynthetic pathway. Catalyzes the ATP-dependent conversion of formylglycinamide ribonucleotide (FGAR) and glutamine to yield formylglycinamidine ribonucleotide (FGAM) and glutamate. The FGAM synthase complex is composed of three subunits. PurQ produces an ammonia molecule by converting glutamine to glutamate. PurL transfers the ammonia molecule to FGAR to form FGAM in an ATP-dependent manner. PurS interacts with PurQ and PurL and is thought to assist in the transfer of the ammonia molecule from PurQ to PurL. In Methanopyrus kandleri (strain AV19 / DSM 6324 / JCM 9639 / NBRC 100938), this protein is Phosphoribosylformylglycinamidine synthase subunit PurQ.